A 246-amino-acid polypeptide reads, in one-letter code: 2-deoxyglucose-6-phosphate phosphatase 1 (246 aa).

Asp83 (nucleophile) is an active-site residue. Asp83 is a binding site for Mg(2+). Substrate contacts are provided by residues Asp83, Glu92, and 146 to 149 (DVKN). Asp183 is a binding site for Mg(2+).

This sequence belongs to the HAD-like hydrolase superfamily. DOG/GPP family. It depends on Mg(2+) as a cofactor.

It carries out the reaction 2-deoxy-D-glucose 6-phosphate + H2O = 2-deoxy-D-glucose + phosphate. In terms of biological role, phosphatase that is active on 2-deoxy-D-glucose 6-phosphate (2-DOG-6P), as well as on fructose-1-P. This is 2-deoxyglucose-6-phosphate phosphatase 1 from Saccharomyces cerevisiae (strain ATCC 204508 / S288c) (Baker's yeast).